The chain runs to 174 residues: Small hydrophobic protein (174 aa).

The helical transmembrane segment at 33-53 threads the bilayer; the sequence is VAVICAILALIFLVATIGLSV. N-linked (GlcNAc...) asparagine; by host glycosylation is present at asparagine 165.

The protein localises to the membrane. This is Small hydrophobic protein (SH) from Meleagris gallopavo (Wild turkey).